Here is a 60-residue protein sequence, read N- to C-terminus: Cecropin-B type 1 (60 aa).

Positions 1-24 are cleaved as a signal peptide; it reads MNFNKLFALVLLIGLVLLTGQTEA. Ile-58 is modified (isoleucine amide).

The protein belongs to the cecropin family.

The protein localises to the secreted. Cecropins have lytic and antibacterial activity against several Gram-positive and Gram-negative bacteria. In Aedes albopictus (Asian tiger mosquito), this protein is Cecropin-B type 1 (CECB1).